We begin with the raw amino-acid sequence, 4059 residues long: Fibrocystin (4059 aa).

The N-terminal stretch at 1–18 is a signal peptide; it reads MMLAWLVSLLSMEVLLLA. The Extracellular segment spans residues 19 to 3851; the sequence is KPYSSFQFEP…LPVASKERST (3833 aa). The 85-residue stretch at 25 to 109 folds into the IPT/TIG 1; atypical domain; the sequence is QFEPAEGSLA…AGPYSLEMRS (85 aa). Residues N55 and N224 are each glycosylated (N-linked (GlcNAc...) asparagine). 2 consecutive IPT/TIG domains span residues 135–230 and 257–333; these read PVLY…FSVF and PEIL…FEVG. The PA14 domain maps to 323 to 483; it reads AGNRGLRFEV…TWLNPDVVNT (161 aa). N-linked (GlcNAc...) asparagine glycosylation is found at N355, N385, N518, N527, N620, N639, N709, N867, N965, N975, N1082, N1114, N1133, N1239, N1273, N1308, N1319, N1344, N1373, N1456, N1471, N1528, N1613, N1627, N1694, N1760, N1775, N1875, N1879, N1915, N1955, N2030, and N2139. IPT/TIG domains follow at residues 945 to 997 and 1017 to 1100; these read LVHF…FMLV and PRLD…AFTY. Residues 1106–1190 form the IPT/TIG 6; atypical domain; the sequence is PVIVSLSRNR…IRSQGVDLYI (85 aa). An IPT/TIG 7 domain is found at 1198-1266; that stretch reads SVEPCSGSLL…RADVLTVLAS (69 aa). In terms of domain architecture, IPT/TIG 8; atypical spans 1297–1378; it reads PVVTAMWGEF…MGFANMSVVP (82 aa). In terms of domain architecture, IPT/TIG 9 spans 1385-1466; that stretch reads PQIIAIFPTH…ITVLVNGLTS (82 aa). 2 consecutive IPT/TIG domains span residues 1482–1566 and 1569–1637; these read PIVD…RNFF and PQVL…IDVN. The 85-residue stretch at 1654-1738 folds into the IPT/TIG 12; atypical domain; the sequence is PELLSVSRSQ…VLRATVTSVT (85 aa). A G8 1 domain is found at 1928–2049; the sequence is HSWFPQRVPH…PEVTVTYLQA (122 aa). PbH1 repeat units lie at residues 2244–2266 and 2287–2321; these read TWGL…LLGS and EQGS…YTFS. N-linked (GlcNAc...) asparagine glycosylation occurs at N2380. PbH1 repeat units lie at residues 2404–2426 and 2459–2481; these read SNNL…DILE and RWEL…AIRT. N-linked (GlcNAc...) asparagine glycosylation is found at N2466, N2503, N2529, N2547, N2581, N2589, N2627, N2747, and N2762. Residues 2741 to 2867 enclose the G8 2 domain; the sequence is KGWGGYNHTI…PKKSWVHLGA (127 aa). PbH1 repeat units follow at residues 3004–3026 and 3027–3049; these read SAGS…HASS and SHGV…DVEG. An N-linked (GlcNAc...) asparagine glycan is attached at N3051. Residues 3080 to 3102 form a PbH1 7 repeat; it reads AEDIILHGNVVAGSERLGFHVGG. 2 N-linked (GlcNAc...) asparagine glycosylation sites follow: N3133 and N3162. A PbH1 8 repeat occupies 3188–3212; that stretch reads TVQITLRNSVIVATSSSFDCIHDRK. 3 N-linked (GlcNAc...) asparagine glycosylation sites follow: N3218, N3719, and N3831. The helical transmembrane segment at 3852 to 3872 threads the bilayer; it reads IILALSLCSVASWVALSCLVC. The interval 3869–3886 is ciliary targeting sequence (CST); it reads CLVCCWFKKSKTRKIKPE. Residues 3873–4059 are Cytoplasmic-facing; it reads CWFKKSKTRK…LHTAPPETIQ (187 aa). Basic and acidic residues predominate over residues 3885 to 3898; it reads PEDISESQAKEQKK. The interval 3885–3915 is disordered; it reads PEDISESQAKEQKKNTHNSSKPRGLQAKTAK. The tract at residues 3946–3970 is nuclear localization signal (NLS); the sequence is KRKVSRLAVTEERTTTPAPKIPRIT. Residues 4015-4038 form a disordered region; it reads QERKQGQEPSQLDKGSDCTGLSQE.

As to quaternary structure, interacts with CAMLG. Interacts with PKD2. Interacts (via CST) with ARF4; this interaction allows an efficient PKHD1 trafficking to the cilium. Interacts (via CST) with RAB8A; this interaction controls trafficking through the endomembrane systeme and to the cilium. Interacts (via CST) with TULP3; this interaction allows PKHD1 trafficking to the cilium. In terms of processing, palmitoylated. Palmitoylation facilitates the trafficking to the cilia and membrane targeting. Post-translationally, N-glycosylated. Several proteolytic cleavages occur within the extracellular domain, whereas at least one cleavage occurs within the cytoplasmic domain. Cleaved by a probable proprotein convertase which produces an extracellular domain (polyductin extracellular domain, (PECD)) and a C-terminal fragment (polyductin transmembrane fragment (PTM)) which are tethered together by disulfide bonds. This extracellular domain (PECD) is then shed from the primary cilium by activation of a member of the ADAM metalloproteinase disintegrins family, resulting in concomitant release of an intra-cellular C-terminal fragment (ICD) via a gamma-secretase-dependent process. The proteolytic cleavage of the C-terminal intracellular fragment (ICD) is controlled by cytosolic calcium concentration and activation of PKC. In terms of tissue distribution, expressed in bile ducts and distal nephron segments but is absent from the proximal tubule. Expressed in pancreas and kidney but also in the liver. Expressed primarily in the distal tubule and thick ascending limb of the loop of Henle, and at low-level in the proximal tubule before renal development is complete at P0.

The protein localises to the cell membrane. It localises to the cytoplasm. The protein resides in the apical cell membrane. It is found in the cytoskeleton. Its subcellular location is the cilium basal body. The protein localises to the cell projection. It localises to the cilium. The protein resides in the spindle. It is found in the chromosome. Its subcellular location is the centromere. The protein localises to the nucleus. It localises to the secreted. The protein resides in the extracellular exosome. It is found in the endoplasmic reticulum. Its subcellular location is the golgi apparatus. Promotes ciliogenesis in renal epithelial cells and therefore participates in the tubules formation and/or ensures the maintenance of the architecture of the lumen of the kidney. Has an impact on cellular symmetry by ensuring correct bipolar cell division through the regulation of centrosome duplication and mitotic spindle assembly and by maintaining oriented cell division (OCD) during tubular elongation through planar cell polarity (PCP) pathway. During epithelial cell morphogenesis, it also regulates cell-cell and cell-matrix adhesion and participates in cell motility. Promotes cell-cell contact through the positive regulation of PTK2 kinase activity leading to either positive regulation of epithelial cell proliferation through the HRAS/RAF1 pathways, or negative regulation of apoptosis through the PDK1/AKT1 pathway. May act in collecting-duct and biliary differentiation. May participate in the regulation of the cholangiocytes proliferation and the CCN2 production in an CXCL8-dependent manner. This chain is Fibrocystin, found in Mus musculus (Mouse).